The following is a 526-amino-acid chain: Probable DNA ligase (526 aa).

An ATP-binding site is contributed by Glu228. The N6-AMP-lysine intermediate role is filled by Lys230. Residues Arg235, Arg250, Glu279, Phe319, Arg391, and Lys397 each coordinate ATP.

This sequence belongs to the ATP-dependent DNA ligase family. Mg(2+) serves as cofactor.

It carries out the reaction ATP + (deoxyribonucleotide)n-3'-hydroxyl + 5'-phospho-(deoxyribonucleotide)m = (deoxyribonucleotide)n+m + AMP + diphosphate.. DNA ligase that seals nicks in double-stranded DNA during DNA replication, DNA recombination and DNA repair. In Mycobacterium avium (strain 104), this protein is Probable DNA ligase.